The following is a 163-amino-acid chain: Epithelial membrane protein 3 (163 aa).

The helical transmembrane segment at 4 to 24 (LLLVVSALHILILVLLFVATL) threads the bilayer. N-linked (GlcNAc...) asparagine glycans are attached at residues asparagine 46 and asparagine 56. 3 consecutive transmembrane segments (helical) span residues 66 to 86 (VQAL…LFMI), 100 to 120 (TGLC…IYAI), and 139 to 159 (FALA…YIHL).

The protein belongs to the PMP-22/EMP/MP20 family.

The protein resides in the membrane. Functionally, probably involved in cell proliferation and cell-cell interactions. This is Epithelial membrane protein 3 (Emp3) from Rattus norvegicus (Rat).